The sequence spans 447 residues: Argininosuccinate synthase (447 aa).

ATP contacts are provided by residues 17–25 (AFSGGLDTS) and A43. Y99 is a binding site for L-citrulline. The ATP site is built by G129 and T131. T131, N135, and D136 together coordinate L-aspartate. Position 135 (N135) interacts with L-citrulline. D136 serves as a coordination point for ATP. Residues R139 and S192 each coordinate L-citrulline. D194 is a binding site for ATP. L-citrulline-binding residues include T201, E203, and E280.

It belongs to the argininosuccinate synthase family. Type 2 subfamily. Homotetramer.

Its subcellular location is the cytoplasm. The enzyme catalyses L-citrulline + L-aspartate + ATP = 2-(N(omega)-L-arginino)succinate + AMP + diphosphate + H(+). It functions in the pathway amino-acid biosynthesis; L-arginine biosynthesis; L-arginine from L-ornithine and carbamoyl phosphate: step 2/3. This Escherichia coli O1:K1 / APEC protein is Argininosuccinate synthase.